Reading from the N-terminus, the 205-residue chain is uncharacterized protein (205 aa).

3 helical membrane-spanning segments follow: residues 45 to 65 (LFFY…FLVI), 119 to 139 (VFWL…VTAF), and 144 to 164 (FEWM…LWGY).

The protein belongs to the TVP23 family.

Its subcellular location is the membrane. This is an uncharacterized protein from Caenorhabditis elegans.